The primary structure comprises 239 residues: Phosphoadenosine 5'-phosphosulfate reductase (239 aa).

The Nucleophile; cysteine thiosulfonate intermediate role is filled by Cys235.

This sequence belongs to the PAPS reductase family. CysH subfamily.

The protein localises to the cytoplasm. The enzyme catalyses [thioredoxin]-disulfide + sulfite + adenosine 3',5'-bisphosphate + 2 H(+) = [thioredoxin]-dithiol + 3'-phosphoadenylyl sulfate. It participates in sulfur metabolism; hydrogen sulfide biosynthesis; sulfite from sulfate: step 3/3. In terms of biological role, catalyzes the formation of sulfite from phosphoadenosine 5'-phosphosulfate (PAPS) using thioredoxin as an electron donor. The polypeptide is Phosphoadenosine 5'-phosphosulfate reductase (Thiocapsa roseopersicina).